The primary structure comprises 124 residues: FK506-binding protein 1 (124 aa).

Residues G23–N122 enclose the PPIase FKBP-type domain.

The protein belongs to the FKBP-type PPIase family. FKBP1 subfamily.

The protein localises to the cytoplasm. It carries out the reaction [protein]-peptidylproline (omega=180) = [protein]-peptidylproline (omega=0). Its activity is regulated as follows. Inhibited by rapamycin. PPIases accelerate the folding of proteins. It catalyzes the cis-trans isomerization of proline imidic peptide bonds in oligopeptides. The polypeptide is FK506-binding protein 1 (RBP1) (Candida albicans (strain SC5314 / ATCC MYA-2876) (Yeast)).